The sequence spans 270 residues: Aliphatic sulfonates import ATP-binding protein SsuB 3 (270 aa).

The 222-residue stretch at 17–238 (LAVQNLKKAF…ARGSHRLAAL (222 aa)) folds into the ABC transporter domain. Residue 49-56 (GRSGCGKS) participates in ATP binding.

This sequence belongs to the ABC transporter superfamily. Aliphatic sulfonates importer (TC 3.A.1.17.2) family. In terms of assembly, the complex is composed of two ATP-binding proteins (SsuB), two transmembrane proteins (SsuC) and a solute-binding protein (SsuA).

It is found in the cell inner membrane. It catalyses the reaction ATP + H2O + aliphatic sulfonate-[sulfonate-binding protein]Side 1 = ADP + phosphate + aliphatic sulfonateSide 2 + [sulfonate-binding protein]Side 1.. In terms of biological role, part of the ABC transporter complex SsuABC involved in aliphatic sulfonates import. Responsible for energy coupling to the transport system. The chain is Aliphatic sulfonates import ATP-binding protein SsuB 3 from Pseudomonas syringae pv. tomato (strain ATCC BAA-871 / DC3000).